Here is a 344-residue protein sequence, read N- to C-terminus: NAD-dependent alcohol dehydrogenase (344 aa).

7 residues coordinate Zn(2+): cysteine 38, histidine 66, aspartate 96, cysteine 99, cysteine 102, cysteine 110, and cysteine 152.

The protein belongs to the zinc-containing alcohol dehydrogenase family. As to quaternary structure, homodimer and homotetramer. Zn(2+) serves as cofactor.

The enzyme catalyses a primary alcohol + NAD(+) = an aldehyde + NADH + H(+). The catalysed reaction is a secondary alcohol + NAD(+) = a ketone + NADH + H(+). This is NAD-dependent alcohol dehydrogenase (adh) from Sulfolobus acidocaldarius (strain ATCC 33909 / DSM 639 / JCM 8929 / NBRC 15157 / NCIMB 11770).